The chain runs to 495 residues: Protein adenylyltransferase Fic (495 aa).

The segment at 1-27 (MGTEAEQPSPPSPPAQQQEQTNPPLWN) is disordered. The helical transmembrane segment at 36 to 55 (LYRLVLFFIAGSLAAWTIHA) threads the bilayer. TPR repeat units lie at residues 121-154 (ALVS…APRH) and 155-189 (PEVL…SPSN). An Inhibitory (S/T)XXXE(G/N) motif motif is present at residues 246–251 (SVGIEG). ATP is bound by residues E250 and 331 to 334 (VGGH). The region spanning 300–435 (ITIKDILELH…IRPFVRFIAD (136 aa)) is the Fido domain. Residue H378 is part of the active site. Residues 382–389 (DGNGRTSR), 414–415 (YY), and N422 each bind ATP.

It belongs to the fic family. Homodimer.

It localises to the membrane. The enzyme catalyses L-tyrosyl-[protein] + ATP = O-(5'-adenylyl)-L-tyrosyl-[protein] + diphosphate. It catalyses the reaction L-threonyl-[protein] + ATP = 3-O-(5'-adenylyl)-L-threonyl-[protein] + diphosphate. The catalysed reaction is 3-O-(5'-adenylyl)-L-threonyl-[protein] + H2O = L-threonyl-[protein] + AMP + H(+). Its activity is regulated as follows. The side chain of Glu-250 determines which of the two opposing activities (AMPylase or de-AMPylase) will take place. In response to endoplasmic reticulum stress, mediates de-AMPylase activity. Adenylyltransferase activity is inhibited by the inhibitory helix present at the N-terminus: Glu-250 binds ATP and competes with ATP-binding at Arg-389, thereby preventing adenylyltransferase activity. In unstressed cells, disengagement of Glu-250 promotes adenylyltransferase activity. Activation dissociates ATP-binding from Glu-250, allowing ordered binding of the entire ATP moiety with the alpha-phosphate in an orientation that is productive for accepting an incoming target hydroxyl side chain. Its function is as follows. Protein that can both mediate the addition of adenosine 5'-monophosphate (AMP) to specific residues of target proteins (AMPylation), and the removal of the same modification from target proteins (de-AMPylation), depending on the context. The side chain of Glu-250 determines which of the two opposing activities (AMPylase or de-AMPylase) will take place. Acts as a key regulator of the unfolded protein response (UPR) by mediating AMPylation or de-AMPylation of Hsc70-3/BiP. In unstressed cells, acts as an adenylyltransferase by mediating AMPylation of Hsc70-3/BiP at 'Thr-518', thereby inactivating it. In response to endoplasmic reticulum stress, acts as a phosphodiesterase by mediating removal of ATP (de-AMPylation) from Hsc70-3/BiP at 'Thr-518', leading to restore HSPA5/BiP activity. This is Protein adenylyltransferase Fic from Drosophila yakuba (Fruit fly).